Consider the following 618-residue polypeptide: MPRSRGGRAAPGQASRWSGWRAPGRLLPLLPALCCLAAAAGAGKPAGADAPFAGQNWLKSYGYLLPYESRASALHSGKALQSAVSTMQQFYGIPVTGVLDQTTIEWMKKPRCGVPDHPHLSRRRRNKRYALTGQKWRQKHITYSIHNYTPKVGELDTRKAIRQAFDVWQKVTPLTFEEVPYHEIKSDRKEADIMIFFASGFHGDSSPFDGEGGFLAHAYFPGPGIGGDTHFDSDEPWTLGNANHDGNDLFLVAVHELGHALGLEHSNDPSAIMAPFYQYMETHNFKLPQDDLQGIQKIYGPPAEPLEPTRPLPTLPVRRIHSPSERKHERHPRPPRPPLGDRPSTPGAKPNICDGNFNTVALFRGEMFVFKDRWFWRLRNNRVQEGYPMQIEQFWKGLPARIDAAYERADGRFVFFKGDKYWVFKEVTVEPGYPHSLGELGSCLPREGIDTALRWEPVGKTYFFKGERYWRYSEERRATDPGYPKPITVWKGIPQAPQGAFISKEGYYTYFYKGRDYWKFDNQKLSVEPGYPRNILRDWMGCKQKEVERRKERRLPQDDVDIMVTIDDVPGSVNAVAVVVPCTLSLCLLVLLYTIFQFKNKAGPQPVTYYKRPVQEWV.

The first 41 residues, 1 to 41 (MPRSRGGRAAPGQASRWSGWRAPGRLLPLLPALCCLAAAAG), serve as a signal peptide directing secretion. The propeptide occupies 42–128 (AGKPAGADAP…HLSRRRRNKR (87 aa)). The Extracellular segment spans residues 42-575 (AGKPAGADAP…IDDVPGSVNA (534 aa)). The short motif at 110–117 (PRCGVPDH) is the Cysteine switch element. Residues Cys112 and His255 each contribute to the Zn(2+) site. Glu256 is a catalytic residue. The Zn(2+) site is built by His259 and His265. The disordered stretch occupies residues 296 to 352 (QKIYGPPAEPLEPTRPLPTLPVRRIHSPSERKHERHPRPPRPPLGDRPSTPGAKPNI). Pro residues predominate over residues 302-314 (PAEPLEPTRPLPT). Hemopexin repeat units lie at residues 350–398 (PNIC…WKGL), 399–444 (PARI…GSCL), 446–494 (REGI…KGIP), and 495–542 (QAPQ…WMGC). A disulfide bridge connects residues Cys353 and Cys542. A helical transmembrane segment spans residues 576 to 596 (VAVVVPCTLSLCLLVLLYTIF). The Cytoplasmic portion of the chain corresponds to 597–618 (QFKNKAGPQPVTYYKRPVQEWV). The PDZ-binding motif lies at 616 to 618 (EWV).

The protein belongs to the peptidase M10A family. Interacts with GRIP1 and GRIP2. Interacts (via PDZ-binding motif) with APBA3 (via PDZ domain). Requires Zn(2+) as cofactor. The cofactor is Ca(2+). Post-translationally, cleaved by a furin endopeptidase in the trans-Golgi network. In terms of tissue distribution, mainly expressed in neuronal cells of both central and peripheral nervous systems. Expressed by CGRP-containing peptidergic nociceptors in dorsal root ganglia. Expressed in adult neural stem cell and ependymocytes. Expressed at low level in testis.

It localises to the cell membrane. It is found in the golgi apparatus. The protein resides in the trans-Golgi network membrane. The protein localises to the secreted. Its subcellular location is the extracellular space. It localises to the extracellular matrix. Its function is as follows. Metalloprotease that mediates cleavage of N-cadherin (CDH2) and acts as a regulator of neuro-immune interactions and neural stem cell quiescence. Involved in cell-cell interactions between nociceptive neurites and mast cells, possibly by mediating cleavage of CDH2, thereby acting as a mediator of peripheral thermal nociception and inflammatory hyperalgesia. Key regulator of neural stem cells quiescence by mediating cleavage of CDH2, affecting CDH2-mediated anchorage of neural stem cells to ependymocytes in the adult subependymal zone, leading to modulate their quiescence. May play a role in axonal growth. Able to activate progelatinase A. May also be a proteoglycanase involved in degradation of proteoglycans, such as dermatan sulfate and chondroitin sulfate proteoglycans. Cleaves partially fibronectin, but not collagen type I, nor laminin. The polypeptide is Matrix metalloproteinase-24 (Mmp24) (Mus musculus (Mouse)).